A 356-amino-acid polypeptide reads, in one-letter code: 3-dehydroquinate synthase (356 aa).

NAD(+) contacts are provided by residues 106-110, 130-131, Lys-143, and Lys-152; these read GVVGD and TT. Glu-185, His-248, and His-265 together coordinate Zn(2+).

This sequence belongs to the sugar phosphate cyclases superfamily. Dehydroquinate synthase family. Co(2+) is required as a cofactor. Requires Zn(2+) as cofactor. The cofactor is NAD(+).

The protein localises to the cytoplasm. The catalysed reaction is 7-phospho-2-dehydro-3-deoxy-D-arabino-heptonate = 3-dehydroquinate + phosphate. It participates in metabolic intermediate biosynthesis; chorismate biosynthesis; chorismate from D-erythrose 4-phosphate and phosphoenolpyruvate: step 2/7. Functionally, catalyzes the conversion of 3-deoxy-D-arabino-heptulosonate 7-phosphate (DAHP) to dehydroquinate (DHQ). In Thermoanaerobacter pseudethanolicus (strain ATCC 33223 / 39E) (Clostridium thermohydrosulfuricum), this protein is 3-dehydroquinate synthase.